Reading from the N-terminus, the 139-residue chain is MPFIESMAPLSRAITRGISQFSCYSNTLVLRSSRNSSSSLVKRSYVSSRVSPKKPQHNSDATSSAQKVANKTHTSSVLPGTILKGLCIKAGGVDPVAREDHEYPEWLWSLLDEPAPNSKTARSHARKSAIRAANFLTKK.

Residues 1 to 50 (MPFIESMAPLSRAITRGISQFSCYSNTLVLRSSRNSSSSLVKRSYVSSRV) constitute a mitochondrion transit peptide. Low complexity predominate over residues 35–50 (NSSSSLVKRSYVSSRV). The tract at residues 35–74 (NSSSSLVKRSYVSSRVSPKKPQHNSDATSSAQKVANKTHT) is disordered. Residues 58-74 (NSDATSSAQKVANKTHT) are compositionally biased toward polar residues.

It belongs to the mitochondrion-specific ribosomal protein mL54 family. In terms of assembly, component of the mitochondrial large ribosomal subunit (mt-LSU). Mature yeast 74S mitochondrial ribosomes consist of a small (37S) and a large (54S) subunit. The 37S small subunit contains a 15S ribosomal RNA (15S mt-rRNA) and at least 32 different proteins. The 54S large subunit contains a 21S rRNA (21S mt-rRNA) and at least 45 different proteins.

The protein resides in the mitochondrion. Component of the mitochondrial ribosome (mitoribosome), a dedicated translation machinery responsible for the synthesis of mitochondrial genome-encoded proteins, including at least some of the essential transmembrane subunits of the mitochondrial respiratory chain. The mitoribosomes are attached to the mitochondrial inner membrane and translation products are cotranslationally integrated into the membrane. mL54 may have a meiosis-specific role as it accumulates during the middle stage of sporulation. This Schizosaccharomyces pombe (strain 972 / ATCC 24843) (Fission yeast) protein is Large ribosomal subunit protein mL54 (mrpl37).